Reading from the N-terminus, the 193-residue chain is MELDVFAGQEKSELSMIEVARAILETRGRDKEMYFNDLVNEIQNYLEKSDADIRSSLPFFYSDLNTDGSFIPLGDNKWGLRSWYAIDEIDEEVITLEDIDENAPKRKNKKVNAFMDGDEDAIDYNDDDPEDENFTPSSAILEYDNDNEDDENAEVESYDSELNEIIPDDDLDDVELSEEDDDDDDDYEDETND.

Residues 14–83 form the HTH HARE-type domain; it reads LSMIEVARAI…GDNKWGLRSW (70 aa). Composition is skewed to acidic residues over residues 119-133 and 143-193; these read EDAI…EDEN and YDND…ETND. A disordered region spans residues 119 to 193; it reads EDAIDYNDDD…DDDYEDETND (75 aa).

It belongs to the RpoE family. RNAP is composed of a core of 2 alpha, a beta and a beta' subunits. The core is associated with a delta subunit and one of several sigma factors.

In terms of biological role, participates in both the initiation and recycling phases of transcription. In the presence of the delta subunit, RNAP displays an increased specificity of transcription, a decreased affinity for nucleic acids, and an increased efficiency of RNA synthesis because of enhanced recycling. The polypeptide is Probable DNA-directed RNA polymerase subunit delta (Streptococcus thermophilus (strain CNRZ 1066)).